Consider the following 191-residue polypeptide: MDSINMTEKEKMTKGLMYDSFDEELCKDRTEARELIHRFNNSMDKLERKDITKQLFGSTGEKIYIEPTLRVDYGYNIHVGENFFANFGTIFLDTCPITIGKNAMLAPNVQFYSATHPIDPTERNSGLELGRPITIGDNVWIGGGVIILPGVELGDNVVVGAGAVVTKSFGSNVVIAGNPAKIIKQIPVKSE.

Belongs to the transferase hexapeptide repeat family.

This is Putative acetyltransferase DDB_G0280825 from Dictyostelium discoideum (Social amoeba).